The primary structure comprises 203 residues: CASP-like protein 2U6 (203 aa).

Residues 1-31 lie on the Cytoplasmic side of the membrane; that stretch reads MSEHRIPVAADKKISPPISAGEQKGCKGLKR. Residues 32-52 form a helical membrane-spanning segment; that stretch reads TDLMLRFAAFVCCTVTMVVLI. At 53 to 84 the chain is on the extracellular side; it reads TDKQTSAIQVPGFNNLTITKTVSFDLAKAFVY. An N-linked (GlcNAc...) asparagine glycan is attached at asparagine 67. The chain crosses the membrane as a helical span at residues 85–105; that stretch reads LVSAAGIGAGYTLLVLVLSII. The Cytoplasmic segment spans residues 106–111; it reads SAERSK. The helical transmembrane segment at 112 to 132 threads the bilayer; sequence AIAWFIFVFDQLITYVLLAAA. Residues 133–164 are Extracellular-facing; it reads AASTEVAYMGAHAPPEASWLKVCSLFGRFCHQ. A helical transmembrane segment spans residues 165-185; that stretch reads LGASLVTSLISTVLFAFSAAI. At 186–203 the chain is on the cytoplasmic side; the sequence is SAYYLFSNTNVRPAYSKG.

Belongs to the Casparian strip membrane proteins (CASP) family. Homodimer and heterodimers.

The protein resides in the cell membrane. The chain is CASP-like protein 2U6 from Selaginella moellendorffii (Spikemoss).